Reading from the N-terminus, the 115-residue chain is Large ribosomal subunit protein P2z (115 aa).

The segment at 62-115 (LASVPSGGGGGVAVASATSGGGGGGGAPAAESKKEEKKEEKEESDDDMGFSLFE) is disordered. The segment covering 92 to 102 (ESKKEEKKEEK) has biased composition (basic and acidic residues). Ser105 carries the post-translational modification Phosphoserine.

The protein belongs to the eukaryotic ribosomal protein P1/P2 family. P1 and P2 exist as dimers at the large ribosomal subunit. Post-translationally, phosphorylated.

Plays an important role in the elongation step of protein synthesis. The chain is Large ribosomal subunit protein P2z (RPP2A) from Arabidopsis thaliana (Mouse-ear cress).